We begin with the raw amino-acid sequence, 152 residues long: Snaclec agkisacutacin subunit A (152 aa).

A signal peptide spans 1–23 (MGRFIFVSFGLLVVFLSLSGTAA). One can recognise a C-type lectin domain in the interval 24-152 (DCSSGWSSYE…EQQDPFVCEA (129 aa)). Intrachain disulfides connect Cys-25–Cys-36, Cys-53–Cys-150, and Cys-125–Cys-142. 3 residues coordinate Ca(2+): Ser-64, Glu-66, and Glu-70. Glu-151 is a Ca(2+) binding site.

It belongs to the snaclec family. As to quaternary structure, heterodimer with subunit B of AaACP or agkisacutacin; disulfide-linked. Expressed by the venom gland.

It localises to the secreted. Anticoagulant protein which binds to the gamma-carboxyglutamic acid-domain regions of factors IX (F9) and factor X (F10) in the presence of calcium with a 1 to 1 stoichiometry. Also inhibits platelet aggregation by binding to platelet glycoprotein Ibalpha (GP1BA) and functioning as a blocker of von Willebrand factor (VWF). Is devoid of hemorrhagic and lethal activities. Possesses antithrombotic and thrombolytic activities. Also hydrolyzes the Aalpha-chain of fibrinogen (FGA). Does not affect the Bbeta-chain (FGB) and the gamma chain (FGG). In Deinagkistrodon acutus (Hundred-pace snake), this protein is Snaclec agkisacutacin subunit A.